We begin with the raw amino-acid sequence, 1044 residues long: Outer dynein arm-docking complex subunit 2 (1044 aa).

2 stretches are compositionally biased toward basic and acidic residues: residues 317-338 and 379-401; these read IKFS…EVAI and SKDR…EKSR. Disordered stretches follow at residues 317 to 409 and 423 to 446; these read IKFS…PGRA and ISDS…ANAD. 5 HEAT repeats span residues 448 to 485, 487 to 527, 530 to 568, 627 to 665, and 668 to 706; these read PSEY…AQET, QLAI…NPQI, NIVD…FRRA, AIRK…EENY, and AIKA…DEET. ARM repeat units lie at residues 484–523, 525–564, 535–577, 622–661, 663–702, 746–785, 828–867, 871–910, 912–951, 953–992, and 1004–1031; these read ETCQ…EISH, PQIR…NVAK, GGLP…RHGG, YANK…ECAS, ENYR…QCAE, KENV…ECCQ, PESM…PCIQ, DAGE…NIAK, QENL…RCCM, GRNR…QLSE, and GAVK…ISNI. 5 HEAT repeats span residues 831–870, 874–914, 916–955, 958–996, and 999–1037; these read MMII…QNAK, EMVR…DQEN, AVIT…WGRN, AFGE…DADN, and TMHE…LALA.

Component of the outer dynein arm-docking complex along with ODAD1, ODAD3, ODAD4 and CLXN. Interacts with CFAP61. As to expression, expressed in trachea multiciliated cells.

The protein localises to the cytoplasm. The protein resides in the cytoskeleton. It is found in the cilium axoneme. Its subcellular location is the cilium basal body. Component of the outer dynein arm-docking complex (ODA-DC) that mediates outer dynein arms (ODA) binding onto the doublet microtubule. Involved in mediating assembly of both ODAs and their axonemal docking complex onto ciliary microtubules. This chain is Outer dynein arm-docking complex subunit 2 (ODAD2), found in Bos taurus (Bovine).